A 177-amino-acid chain; its full sequence is B9 domain-containing protein 2 (177 aa).

Residues Ala2–Asn118 form the C2 B9-type domain.

This sequence belongs to the B9D family. As to quaternary structure, probable component of the tectonic-like complex (also named MKS complex), composed of B9d1, B9d2, Cc2d2a, Mks1 and tctn. As to expression, expressed in chordotonal neurons in the antennae (at protein level). Expressed in spermatids (at protein level).

The protein localises to the cytoplasm. It localises to the cytoskeleton. Its subcellular location is the cilium basal body. Functionally, probable component of the tectonic-like complex (also named MKS complex), a complex localized at the transition zone of primary cilia. Has a role in ciliary structure and function. The sequence is that of B9 domain-containing protein 2 from Drosophila melanogaster (Fruit fly).